Consider the following 73-residue polypeptide: Translation initiation factor IF-1 3 (73 aa).

The 72-residue stretch at 1-72 folds into the S1-like domain; the sequence is MAKEELVEFG…TKGRINYRHK (72 aa).

This sequence belongs to the IF-1 family. Component of the 30S ribosomal translation pre-initiation complex which assembles on the 30S ribosome in the order IF-2 and IF-3, IF-1 and N-formylmethionyl-tRNA(fMet); mRNA recruitment can occur at any time during PIC assembly.

It is found in the cytoplasm. Functionally, one of the essential components for the initiation of protein synthesis. Stabilizes the binding of IF-2 and IF-3 on the 30S subunit to which N-formylmethionyl-tRNA(fMet) subsequently binds. Helps modulate mRNA selection, yielding the 30S pre-initiation complex (PIC). Upon addition of the 50S ribosomal subunit IF-1, IF-2 and IF-3 are released leaving the mature 70S translation initiation complex. The sequence is that of Translation initiation factor IF-1 3 from Cupriavidus metallidurans (strain ATCC 43123 / DSM 2839 / NBRC 102507 / CH34) (Ralstonia metallidurans).